The chain runs to 602 residues: Sulfite reductase [NADPH] flavoprotein alpha-component (602 aa).

A Flavodoxin-like domain is found at 68-206 (ITIISASQTG…NYIQWSEELL (139 aa)). FMN is bound by residues 74 to 79 (SQTGNA), 121 to 124 (STQG), and 157 to 166 (LGDVSYNLFC). One can recognise an FAD-binding FR-type domain in the interval 237-451 (YKPAVATVLL…VEEKSNFRLP (215 aa)). Residues T325, K359, 389 to 392 (RLYS), 407 to 409 (TVG), and 422 to 425 (GGSS) contribute to the FAD site. NADP(+) is bound by residues 522 to 523 (SR), 528 to 532 (KIYVQ), and D564. Y602 is an FAD binding site.

The protein belongs to the NADPH-dependent sulphite reductase flavoprotein subunit CysJ family. This sequence in the N-terminal section; belongs to the flavodoxin family. It in the C-terminal section; belongs to the flavoprotein pyridine nucleotide cytochrome reductase family. In terms of assembly, alpha(8)-beta(8). The alpha component is a flavoprotein, the beta component is a hemoprotein. It depends on FAD as a cofactor. FMN serves as cofactor.

It catalyses the reaction hydrogen sulfide + 3 NADP(+) + 3 H2O = sulfite + 3 NADPH + 4 H(+). Its pathway is sulfur metabolism; hydrogen sulfide biosynthesis; hydrogen sulfide from sulfite (NADPH route): step 1/1. Its function is as follows. Component of the sulfite reductase complex that catalyzes the 6-electron reduction of sulfite to sulfide. This is one of several activities required for the biosynthesis of L-cysteine from sulfate. The flavoprotein component catalyzes the electron flow from NADPH -&gt; FAD -&gt; FMN to the hemoprotein component. This is Sulfite reductase [NADPH] flavoprotein alpha-component from Buchnera aphidicola subsp. Schizaphis graminum (strain Sg).